Consider the following 342-residue polypeptide: Uroporphyrinogen decarboxylase (342 aa).

Substrate contacts are provided by residues 24–28 (RQAGR), D74, Y149, S204, and H319.

This sequence belongs to the uroporphyrinogen decarboxylase family. In terms of assembly, homodimer.

It is found in the cytoplasm. It catalyses the reaction uroporphyrinogen III + 4 H(+) = coproporphyrinogen III + 4 CO2. The protein operates within porphyrin-containing compound metabolism; protoporphyrin-IX biosynthesis; coproporphyrinogen-III from 5-aminolevulinate: step 4/4. In terms of biological role, catalyzes the decarboxylation of four acetate groups of uroporphyrinogen-III to yield coproporphyrinogen-III. This Chelativorans sp. (strain BNC1) protein is Uroporphyrinogen decarboxylase.